The sequence spans 585 residues: Poly(A) RNA polymerase, mitochondrial (585 aa).

The transit peptide at 1–37 directs the protein to the mitochondrion; it reads MAARGVGLLTRLPVCSQRRNRIPRSISRLLSCPGTIA. Lys-90 is modified (N6-acetyllysine). Residues 107 to 109 and 244 to 245 contribute to the ATP site; these read YES and GC. Residues Asp-246 and Asp-248 each contribute to the Mg(2+) site. The PAP-associated domain maps to 441 to 486; it reads ELLIKEFFEYFGNFAFNKNSINIRQGREQNKPDSSPLYIQNPFETS. Residues 537-585 are disordered; the sequence is PGSGHTSLSRKKKKKPMSEKVKGLLASIKSNSPDSSTDTSGKRTISTQA. Residues 564–585 are compositionally biased toward polar residues; it reads IKSNSPDSSTDTSGKRTISTQA.

The protein belongs to the DNA polymerase type-B-like family. As to quaternary structure, homodimer. Mg(2+) serves as cofactor. It depends on Mn(2+) as a cofactor.

It is found in the cytoplasm. It localises to the mitochondrion. It catalyses the reaction RNA(n) + ATP = RNA(n)-3'-adenine ribonucleotide + diphosphate. Polymerase that creates the 3' poly(A) tail of mitochondrial transcripts. Can use all four nucleotides, but has higher activity with ATP and UTP (in vitro). Plays a role in replication-dependent histone mRNA degradation. May be involved in the terminal uridylation of mature histone mRNAs before their degradation is initiated. Might be responsible for the creation of some UAA stop codons which are not encoded in mtDNA. This chain is Poly(A) RNA polymerase, mitochondrial (Mtpap), found in Mus musculus (Mouse).